The chain runs to 150 residues: 3-hydroxyacyl-[acyl-carrier-protein] dehydratase FabZ (150 aa).

Residue histidine 54 is part of the active site.

The protein belongs to the thioester dehydratase family. FabZ subfamily.

It is found in the cytoplasm. The catalysed reaction is a (3R)-hydroxyacyl-[ACP] = a (2E)-enoyl-[ACP] + H2O. Its function is as follows. Involved in unsaturated fatty acids biosynthesis. Catalyzes the dehydration of short chain beta-hydroxyacyl-ACPs and long chain saturated and unsaturated beta-hydroxyacyl-ACPs. The sequence is that of 3-hydroxyacyl-[acyl-carrier-protein] dehydratase FabZ from Colwellia psychrerythraea (strain 34H / ATCC BAA-681) (Vibrio psychroerythus).